Here is a 684-residue protein sequence, read N- to C-terminus: Poly(A) RNA polymerase cid14 (684 aa).

Disordered regions lie at residues 1–52, 64–127, and 161–219; these read MGKK…DAYD, DQEE…KRGE, and WNSD…QAYE. 5 stretches are compositionally biased toward basic and acidic residues: residues 19–35, 73–91, 108–127, 171–186, and 199–210; these read ERTEPLPRRIFKNDKPS, GSKKSRNDNDSEGIRDKGG, DPLEPLEKPDLPEEAIKRGE, SNDKSKNNESLKKSSK, and FFHEANEKSDSN. Mg(2+)-binding residues include Asp298 and Asp300. The ATP site is built by Gly364, Lys389, Ser407, Tyr408, Asn492, and Lys496. Residues 434-492 enclose the PAP-associated domain; it reads NFGVLLLEFLELYGKQFYYDAVGIAVHNGGFYFSKKKMGWLKPNQPYLLSIQDPVDFQN. Residues 623–684 form a disordered region; that stretch reads GHENFQKQAL…SRAKKIRKRF (62 aa). Polar residues predominate over residues 628-655; that stretch reads QKQALTSTGEQSSSNSRANPSKLFNISS. The segment covering 656–672 has biased composition (acidic residues); that stretch reads DDSEDEVPIIEDTTASD.

This sequence belongs to the DNA polymerase type-B-like family. As to quaternary structure, heterooligomer. Component of the TRAMP complex composed of at least cid14, mtr4, and air1. It depends on Mg(2+) as a cofactor. The cofactor is Mn(2+).

It is found in the nucleus. The protein resides in the nucleolus. The catalysed reaction is RNA(n) + ATP = RNA(n)-3'-adenine ribonucleotide + diphosphate. Functionally, required for 3' polyadenylation of the 5.8S and 25S rRNAs as a prelude to their degradation in the exosome. Involved in the nucleolar organization to ensure faithful chromosome segregation during mitosis. This is Poly(A) RNA polymerase cid14 (cid14) from Schizosaccharomyces pombe (strain 972 / ATCC 24843) (Fission yeast).